The primary structure comprises 191 residues: Cell division protein SepF (191 aa).

Residues 156-167 are compositionally biased toward polar residues; the sequence is EEASPSNMSNKG. A disordered region spans residues 156–191; that stretch reads EEASPSNMSNKGNDLISKETSPAPEPAWGETVATAL.

The protein belongs to the SepF family. Homodimer. Interacts with FtsZ.

It localises to the cytoplasm. In terms of biological role, cell division protein that is part of the divisome complex and is recruited early to the Z-ring. Probably stimulates Z-ring formation, perhaps through the cross-linking of FtsZ protofilaments. Its function overlaps with FtsA. This chain is Cell division protein SepF, found in Prochlorococcus marinus (strain NATL1A).